Consider the following 131-residue polypeptide: Large ribosomal subunit protein bL21 (131 aa).

The protein belongs to the bacterial ribosomal protein bL21 family. As to quaternary structure, part of the 50S ribosomal subunit. Contacts protein L20.

Functionally, this protein binds to 23S rRNA in the presence of protein L20. The chain is Large ribosomal subunit protein bL21 from Cereibacter sphaeroides (strain ATCC 17023 / DSM 158 / JCM 6121 / CCUG 31486 / LMG 2827 / NBRC 12203 / NCIMB 8253 / ATH 2.4.1.) (Rhodobacter sphaeroides).